Here is a 254-residue protein sequence, read N- to C-terminus: Splicing factor tls1 (254 aa).

Basic and acidic residues predominate over residues 69-83 (KEKQLNTANEPHEAN). 2 disordered regions span residues 69 to 90 (KEKQ…SAQS) and 195 to 216 (RKRQ…LRTS). Residues 195–204 (RKRQKKRARM) are compositionally biased toward basic residues. A compositionally biased stretch (basic and acidic residues) spans 205 to 216 (KEKLDSKALRTS).

It belongs to the TLS1 family. Component of the spliceosome. Interacts with brr2.

Its subcellular location is the cytoplasm. It is found in the nucleus. Plays a role in pre-mRNA splicing by facilitating excision of introns featuring long spacing between the branchpoint and 3'-splice site. Assists the splicing of several components involved in chromatin organization, such as several shelterin complex subunits. This chain is Splicing factor tls1, found in Schizosaccharomyces pombe (strain 972 / ATCC 24843) (Fission yeast).